The sequence spans 100 residues: Elicitin Vex2 (100 aa).

3 disulfides stabilise this stretch: Cys3–Cys71, Cys27–Cys56, and Cys51–Cys95.

This sequence belongs to the elicitin family.

It localises to the secreted. Induces local and distal defense responses (incompatible hypersensitive reaction) in plants from the solanaceae and cruciferae families. Elicits leaf necrosis and causes the accumulation of pathogenesis-related proteins. Might interact with the lipidic molecules of the plasma membrane. The polypeptide is Elicitin Vex2 (Phytopythium vexans (Damping-off fungus)).